The primary structure comprises 130 residues: Large ribosomal subunit protein uL14 (130 aa).

The protein belongs to the universal ribosomal protein uL14 family. In terms of assembly, part of the 50S ribosomal subunit. Forms a cluster with proteins L3 and L19. In the 70S ribosome, L14 and L19 interact and together make contacts with the 16S rRNA in bridges B5 and B8.

In terms of biological role, binds to 23S rRNA. Forms part of two intersubunit bridges in the 70S ribosome. This is Large ribosomal subunit protein uL14 from Helicobacter pylori (strain P12).